A 201-amino-acid polypeptide reads, in one-letter code: Adenylyl-sulfate kinase (201 aa).

35–42 (GLSGSGKS) is an ATP binding site. Catalysis depends on serine 109, which acts as the Phosphoserine intermediate.

It belongs to the APS kinase family.

It catalyses the reaction adenosine 5'-phosphosulfate + ATP = 3'-phosphoadenylyl sulfate + ADP + H(+). The protein operates within sulfur metabolism; hydrogen sulfide biosynthesis; sulfite from sulfate: step 2/3. Catalyzes the synthesis of activated sulfate. In Salmonella arizonae (strain ATCC BAA-731 / CDC346-86 / RSK2980), this protein is Adenylyl-sulfate kinase.